Here is a 417-residue protein sequence, read N- to C-terminus: Pre-mRNA-splicing factor RBM22 (417 aa).

Residues 159–186 form a C3H1-type zinc finger; sequence RNRPHICSFWVKGECKRGEECPYRHEKP. Residues 232-305 enclose the RRM domain; sequence TTLYVGGLGD…RRLNVKWGRS (74 aa). Disordered stretches follow at residues 303–348 and 369–417; these read GRSQ…SANY and GLSG…PSSG. The span at 309 to 318 shows a compositional bias: basic and acidic residues; it reads RGKEREHDGS. Pro residues predominate over residues 369 to 391; the sequence is GLSGPPPGFGPHMFPPMAPPPFL.

The protein belongs to the SLT11 family. In terms of assembly, component of the pre-catalytic and catalytic spliceosome complexes. Component of the postcatalytic spliceosome P complex.

The protein resides in the nucleus. Its subcellular location is the cytoplasm. In terms of biological role, required for pre-mRNA splicing as component of the activated spliceosome. Involved in the first step of pre-mRNA splicing. Binds directly to the internal stem-loop (ISL) domain of the U6 snRNA and to the pre-mRNA intron near the 5' splice site during the activation and catalytic phases of the spliceosome cycle. The polypeptide is Pre-mRNA-splicing factor RBM22 (rbm22) (Xenopus laevis (African clawed frog)).